Here is a 339-residue protein sequence, read N- to C-terminus: uncharacterized protein (339 aa).

Positions 17, 19, 197, and 278 each coordinate Zn(2+). Asp-279 is a binding site for substrate.

It belongs to the metallo-dependent hydrolases superfamily. Adenosine and AMP deaminases family. Adenine deaminase type 2 subfamily. Zn(2+) serves as cofactor.

It localises to the cytoplasm. Its subcellular location is the nucleus. This is an uncharacterized protein from Schizosaccharomyces pombe (strain 972 / ATCC 24843) (Fission yeast).